We begin with the raw amino-acid sequence, 418 residues long: Calreticulin (418 aa).

Residues 1–17 (MLLPVPLLLGLLGLAAA) form the signal peptide. The interval 18-197 (EPVVYFKEQF…NSQVESGSLE (180 aa)) is N-domain. Ca(2+) is bound at residue Q26. K48 bears the N6-acetyllysine mark. Ca(2+) contacts are provided by K62 and K64. K64 bears the N6-(2-hydroxyisobutyryl)lysine mark. Cysteines 105 and 137 form a disulfide. An alpha-D-glucoside-binding residues include Y109, K111, Y128, and D135. K159 bears the N6-acetyllysine mark. A 1-1 repeat occupies 191-202 (VESGSLEDDWDF). Residues 191-255 (VESGSLEDDW…DAKKPEDWDE (65 aa)) form a 4 X approximate repeats region. Residues 193-277 (SGSLEDDWDF…NPEYKGEWKP (85 aa)) form a disordered region. Residues 198 to 308 (DDWDFLPPKK…YSPDANIYAY (111 aa)) are P-domain. The segment covering 207-251 (KIKDPDASKPEDWDERAKIDDPTDSKPEDWDKPEHIPDPDAKKPE) has biased composition (basic and acidic residues). K209 is subject to N6-acetyllysine. Tandem repeats lie at residues 210 to 221 (DPDASKPEDWDE), 227 to 238 (DPTDSKPEDWDK), 244 to 255 (DPDAKKPEDWDE), 259 to 269 (GEWEPPVIQNP), 273 to 283 (GEWKPRQIDNP), and 287 to 297 (GTWIHPEIDNP). Positions 237–270 (DKPEHIPDPDAKKPEDWDEEMDGEWEPPVIQNPE) are interaction with PPIB. A compositionally biased stretch (acidic residues) spans 252–261 (DWDEEMDGEW). Residues 259–297 (GEWEPPVIQNPEYKGEWKPRQIDNPDYKGTWIHPEIDNP) form a 3 X approximate repeats region. Positions 309–418 (DSFAVLGLDL…AAAGQAKDEL (110 aa)) are C-domain. Residue D317 participates in an alpha-D-glucoside binding. D328 contributes to the Ca(2+) binding site. Residues 349–418 (VTKTAEKQMK…AAAGQAKDEL (70 aa)) form a disordered region. Residues 352-379 (TAEKQMKDKQDEEQRLKEEEEEKKRKEE) show a composition bias toward basic and acidic residues. Residues 380–409 (EEAEEDEEDKDDKEDEDEDEEDKDEEEEEA) show a composition bias toward acidic residues. Positions 415–418 (KDEL) match the Prevents secretion from ER motif.

Belongs to the calreticulin family. Monomer. Component of an EIF2 complex at least composed of CELF1/CUGBP1, CALR, CALR3, EIF2S1, EIF2S2, HSP90B1 and HSPA5. Interacts with PDIA3/ERp57 and SPACA9. Interacts with TRIM21. Interacts with NR3C1. Interacts with PPIB. Interacts (via P-domain) with PDIA5. Interacts with CLCC1.

Its subcellular location is the endoplasmic reticulum lumen. The protein resides in the cytoplasm. It is found in the cytosol. It localises to the secreted. The protein localises to the extracellular space. Its subcellular location is the extracellular matrix. The protein resides in the cell surface. It is found in the sarcoplasmic reticulum lumen. It localises to the cytoplasmic vesicle. The protein localises to the secretory vesicle. Its subcellular location is the cortical granule. The protein resides in the cytolytic granule. Functionally, calcium-binding chaperone that promotes folding, oligomeric assembly and quality control in the endoplasmic reticulum (ER) via the calreticulin/calnexin cycle. This lectin interacts transiently with almost all of the monoglucosylated glycoproteins that are synthesized in the ER. Interacts with the DNA-binding domain of NR3C1 and mediates its nuclear export. Involved in maternal gene expression regulation. May participate in oocyte maturation via the regulation of calcium homeostasis. Present in the cortical granules of non-activated oocytes, is exocytosed during the cortical reaction in response to oocyte activation and might participate in the block to polyspermy. The protein is Calreticulin (CALR) of Oryctolagus cuniculus (Rabbit).